A 361-amino-acid chain; its full sequence is Prostaglandin E2 receptor EP2 subtype (361 aa).

Polar residues predominate over residues 1–10 (MGSISNNSGS). Residues 1-21 (MGSISNNSGSEDCESREWLPS) form a disordered region. At 1–23 (MGSISNNSGSEDCESREWLPSGE) the chain is on the extracellular side. N6 carries N-linked (GlcNAc...) asparagine glycosylation. Residues 24–47 (SPAISSAMFSAGVLGNLIALALLA) form a helical membrane-spanning segment. Residues 48-65 (RRWRGDAGRRAGRGNSIS) are Cytoplasmic-facing. A helical transmembrane segment spans residues 66–91 (LFHVLVTELVFTDLLGTCLISPVVLA). Over 92–111 (SYARNQTLMALEPERRACTY) the chain is Extracellular. N-linked (GlcNAc...) asparagine glycosylation is present at N96. C109 and C187 are joined by a disulfide. The chain crosses the membrane as a helical span at residues 112–132 (FAFAMTFFSLATMLMLFAMAL). The Cytoplasmic portion of the chain corresponds to 133–151 (ERYLSIGRPYFYQRHVTRR). Residues 152–176 (GGLAVLPTIYTVSLLFCSLPLLGYG) traverse the membrane as a helical segment. The Extracellular portion of the chain corresponds to 177–198 (QYVQYCPGTWCFIRHGRTAYLQ). A helical membrane pass occupies residues 199–223 (LYATLLLLLIVAVLACNFSVILNLI). At 224–262 (RMHRRSGRSRCGPSLGSCRDGSGTRRRGERVSVAEETDH) the chain is on the cytoplasmic side. A disordered region spans residues 230 to 253 (GRSRCGPSLGSCRDGSGTRRRGER). The chain crosses the membrane as a helical span at residues 263–286 (LILLAIMTITFAICSLPFTIFAYM). A glycan (N-linked (GlcNAc...) asparagine) is linked at N287. The Extracellular segment spans residues 287–299 (NETSSRREKWDLQ). The helical transmembrane segment at 300-323 (ALRFLSINSIIDPWVFAIFRPPVL) threads the bilayer. The Cytoplasmic segment spans residues 324 to 361 (RLMRSVLCCRVSLRAQDATQTSCSIQSNASRLTFVDTS).

The protein belongs to the G-protein coupled receptor 1 family.

It localises to the cell membrane. In terms of biological role, receptor for prostaglandin E2 (PGE2). The activity of this receptor is mediated by G(s) proteins that stimulate adenylate cyclase. The subsequent raise in intracellular cAMP is responsible for the relaxing effect of this receptor on smooth muscle. The chain is Prostaglandin E2 receptor EP2 subtype (PTGER2) from Canis lupus familiaris (Dog).